The primary structure comprises 431 residues: ATP-dependent RNA helicase DBP8 (431 aa).

Residues 2-30 carry the Q motif motif; that stretch reads ADFKSLGLSKWLTESLRAMKITQPTAIQK. One can recognise a Helicase ATP-binding domain in the interval 33 to 209; the sequence is IPKILEGRDC…NAPVQKGKPP (177 aa). 46–53 contacts ATP; that stretch reads AKTGSGKT. Residues 155 to 158 carry the DEAD box motif; the sequence is DEAD. A Helicase C-terminal domain is found at 242-389; the sequence is YLYQLLTCEE…TNKVHDTAVI (148 aa). Residues 404–431 form a disordered region; sequence LMAMQKENFGERKRQQKKKQNDGKSLRS. Residues 411–431 are compositionally biased toward basic and acidic residues; sequence NFGERKRQQKKKQNDGKSLRS.

It belongs to the DEAD box helicase family. DDX49/DBP8 subfamily. As to quaternary structure, interacts with ESF2.

Its subcellular location is the nucleus. It localises to the nucleolus. It carries out the reaction ATP + H2O = ADP + phosphate + H(+). ATP-binding RNA helicase involved in 40S ribosomal subunit biogenesis and is required for the normal formation of 18S rRNAs through pre-rRNA processing at A0, A1 and A2 sites. Required for vegetative growth. The sequence is that of ATP-dependent RNA helicase DBP8 (DBP8) from Saccharomyces cerevisiae (strain YJM789) (Baker's yeast).